The primary structure comprises 101 residues: UPF0235 protein MmarC5_0538 (101 aa).

It belongs to the UPF0235 family.

The protein is UPF0235 protein MmarC5_0538 of Methanococcus maripaludis (strain C5 / ATCC BAA-1333).